A 352-amino-acid polypeptide reads, in one-letter code: Histidinol-phosphate aminotransferase (352 aa).

Residue lysine 216 is modified to N6-(pyridoxal phosphate)lysine.

It belongs to the class-II pyridoxal-phosphate-dependent aminotransferase family. Histidinol-phosphate aminotransferase subfamily. It depends on pyridoxal 5'-phosphate as a cofactor.

The catalysed reaction is L-histidinol phosphate + 2-oxoglutarate = 3-(imidazol-4-yl)-2-oxopropyl phosphate + L-glutamate. The protein operates within amino-acid biosynthesis; L-histidine biosynthesis; L-histidine from 5-phospho-alpha-D-ribose 1-diphosphate: step 7/9. The polypeptide is Histidinol-phosphate aminotransferase (Methanoculleus marisnigri (strain ATCC 35101 / DSM 1498 / JR1)).